Reading from the N-terminus, the 806-residue chain is U4/U6.U5 tri-snRNP-associated protein 1 (806 aa).

Residues 1–121 (MGSSKKHRGE…SGDASSLSIE (121 aa)) form a disordered region. Residues 32-42 (HREHKKHKHRS) show a composition bias toward basic residues. Positions 58–101 (ERGSERGSGRRGAEAEARSGAHGRERSQAEPSERRVKREKRDDG) are enriched in basic and acidic residues. Positions 104–119 (AAASSKASSGDASSLS) are enriched in low complexity. Glycyl lysine isopeptide (Lys-Gly) (interchain with G-Cter in SUMO2) cross-links involve residues lysine 125 and lysine 133. Lysine 141 is covalently cross-linked (Glycyl lysine isopeptide (Lys-Gly) (interchain with G-Cter in SUMO1); alternate). Lysine 141 is covalently cross-linked (Glycyl lysine isopeptide (Lys-Gly) (interchain with G-Cter in SUMO2); alternate). Residues lysine 147 and lysine 188 each participate in a glycyl lysine isopeptide (Lys-Gly) (interchain with G-Cter in SUMO2) cross-link. Positions 157–231 (NPMALRQREE…KLLEEMDQEF (75 aa)) form a coiled coil. A Phosphothreonine modification is found at threonine 189. Residue lysine 277 forms a Glycyl lysine isopeptide (Lys-Gly) (interchain with G-Cter in SUMO2) linkage. Serine 321 bears the Phosphoserine mark. Glycyl lysine isopeptide (Lys-Gly) (interchain with G-Cter in SUMO2) cross-links involve residues lysine 329 and lysine 336. Serine 348 is subject to Phosphoserine. Glycyl lysine isopeptide (Lys-Gly) (interchain with G-Cter in SUMO2) cross-links involve residues lysine 400 and lysine 414. The interval 418–504 (MRADDLLPLG…GLEEDEAELE (87 aa)) is disordered. Threonine 430 bears the Phosphothreonine mark. The segment covering 450 to 460 (VEEEALEDEEK) has biased composition (acidic residues). Serine 480, serine 492, and serine 527 each carry phosphoserine. Positions 494 to 540 (EGLEEDEAELELQKQLEKGRRLRQLQQLQQLRDSGEKVLEIVKKLES) form a coiled coil. A Glycyl lysine isopeptide (Lys-Gly) (interchain with G-Cter in SUMO2) cross-link involves residue lysine 554. Positions 578-610 (AGNREEQEELMDFERDEERSANGGSESDGEENI) are disordered. A phosphoserine mark is found at serine 597, serine 602, serine 604, and serine 627. Residues lysine 654, lysine 663, and lysine 690 each participate in a glycyl lysine isopeptide (Lys-Gly) (interchain with G-Cter in SUMO2) cross-link. Position 701 is a phosphothreonine (threonine 701). Residues lysine 705, lysine 715, lysine 729, lysine 755, and lysine 764 each participate in a glycyl lysine isopeptide (Lys-Gly) (interchain with G-Cter in SUMO2) cross-link. Serine 767 carries the post-translational modification Phosphoserine. Threonine 770 carries the phosphothreonine modification. Residues lysine 781 and lysine 786 each participate in a glycyl lysine isopeptide (Lys-Gly) (interchain with G-Cter in SUMO2) cross-link. Serine 795 bears the Phosphoserine mark. Lysine 797 is covalently cross-linked (Glycyl lysine isopeptide (Lys-Gly) (interchain with G-Cter in SUMO2)).

This sequence belongs to the SNU66/SART1 family. Identified in the spliceosome C complex. Component of the U4/U6-U5 tri-snRNP complex composed of the U4, U6 and U5 snRNAs and at least PRPF3, PRPF4, PRPF6, PRPF8, PRPF31, SNRNP200, TXNL4A, SNRNP40, DDX23, CD2BP2, PPIH, SNU13, EFTUD2, SART1 and USP39. Interacts with UBL5. Interacts with IVNS1ABP (via Kelch repeats). Post-translationally, sumoylated with SUMO2. Ubiquitously expressed. Shows a high expression in fetal liver and a low expression in adult liver.

It localises to the nucleus. In terms of biological role, plays a role in mRNA splicing as a component of the U4/U6-U5 tri-snRNP, one of the building blocks of the spliceosome. May also bind to DNA. This Mus musculus (Mouse) protein is U4/U6.U5 tri-snRNP-associated protein 1 (Sart1).